The chain runs to 427 residues: Diaminobutyrate--2-oxoglutarate transaminase (427 aa).

N6-(pyridoxal phosphate)lysine is present on Lys269.

The protein belongs to the class-III pyridoxal-phosphate-dependent aminotransferase family. It depends on pyridoxal 5'-phosphate as a cofactor.

It catalyses the reaction L-2,4-diaminobutanoate + 2-oxoglutarate = L-aspartate 4-semialdehyde + L-glutamate. It participates in amine and polyamine biosynthesis; ectoine biosynthesis; L-ectoine from L-aspartate 4-semialdehyde: step 1/3. Its function is as follows. Catalyzes reversively the conversion of L-aspartate beta-semialdehyde (ASA) to L-2,4-diaminobutyrate (DABA) by transamination with L-glutamate. The polypeptide is Diaminobutyrate--2-oxoglutarate transaminase (ectB) (Marinococcus halophilus).